The primary structure comprises 170 residues: CFA/I fimbrial subunit B (170 aa).

Positions 1–23 (MKFKKTIGAMALTTMFVAVSASA) are cleaved as a signal peptide.

It belongs to the fimbrial CS1 protein family. As to quaternary structure, CFA/I fimbriae are rather rigid, thread-like filaments of 0.5-1 micrometer, with an apparent axial hole, and a diameter of 7 nanometers. A single CFA/I fimbria consists of about 100 identical protein subunits.

The protein resides in the fimbrium. Fimbriae (also called pili), polar filaments radiating from the surface of the bacterium to a length of 0.5-1.5 micrometers and numbering 100-300 per cell, enable bacteria to colonize the epithelium of specific host organs. This is CFA/I fimbrial subunit B (cfaB) from Escherichia coli.